We begin with the raw amino-acid sequence, 90 residues long: Small ribosomal subunit protein bS20 (90 aa).

This sequence belongs to the bacterial ribosomal protein bS20 family.

Its function is as follows. Binds directly to 16S ribosomal RNA. This chain is Small ribosomal subunit protein bS20, found in Francisella philomiragia subsp. philomiragia (strain ATCC 25017 / CCUG 19701 / FSC 153 / O#319-036).